We begin with the raw amino-acid sequence, 256 residues long: Type II phosphatidylinositol 4,5-bisphosphate 4-phosphatase (256 aa).

Residues 1-10 (MAADGIDERS) are compositionally biased toward basic and acidic residues. Residues 1–25 (MAADGIDERSPLISPSSGNVTPTAP) are disordered. Over residues 13-22 (ISPSSGNVTP) the composition is skewed to polar residues. Residue C106 is part of the active site. The CX5R motif signature appears at 106 to 112 (CKDISRR). 2 consecutive transmembrane segments (helical) span residues 191–211 (CCTY…LTVG) and 226–246 (WAVA…WGAI).

It localises to the late endosome membrane. The protein resides in the lysosome membrane. It catalyses the reaction a 1,2-diacyl-sn-glycero-3-phospho-(1D-myo-inositol-4,5-bisphosphate) + H2O = a 1,2-diacyl-sn-glycero-3-phospho-(1D-myo-inositol-5-phosphate) + phosphate. Functionally, catalyzes the hydrolysis of phosphatidylinositol-4,5-bisphosphate (PtdIns-4,5-P2) to phosphatidylinositol-4-phosphate (PtdIns-4-P). This chain is Type II phosphatidylinositol 4,5-bisphosphate 4-phosphatase, found in Xenopus laevis (African clawed frog).